The primary structure comprises 567 residues: TNF receptor-associated factor 3 (567 aa).

The disordered stretch occupies residues 1-26 (MESSKKMDAAGTLQPNPPLKLQPDRG). Residue Cys-55 forms a Glycyl cysteine thioester (Cys-Gly) (interchain with G-Cter in ubiquitin) linkage. An RING-type zinc finger spans residues 67 to 76 (CGHRFCESCM). Residue Lys-106 forms a Glycyl lysine isopeptide (Lys-Gly) (interchain with G-Cter in ubiquitin) linkage. A Glycyl cysteine thioester (Cys-Gly) (interchain with G-Cter in ubiquitin) cross-link involves residue Cys-123. 2 TRAF-type zinc fingers span residues 134–189 (VHLK…IKLQ) and 190–248 (KHED…QQIK). Residues Lys-155 and Lys-167 each participate in a glycyl lysine isopeptide (Lys-Gly) (interchain with G-Cter in ubiquitin) cross-link. The stretch at 266–337 (SNSLEKKVSL…KLKELDKEIR (72 aa)) forms a coiled coil. A Glycyl lysine isopeptide (Lys-Gly) (interchain with G-Cter in ubiquitin) cross-link involves residue Lys-328. One can recognise an MATH domain in the interval 414–559 (NGVLIWKIRD…DDTIFIKVIV (146 aa)).

This sequence belongs to the TNF receptor-associated factor family. A subfamily. As to quaternary structure, homotrimer. Heterotrimer with TRAF2 and TRAF5. Interacts with LTBR/TNFRSF3, TNFRSF4, TNFRSF5/CD40, TNFRSF8/CD30, TNFRSF13C TNFRSF17/BCMA, TLR4 and EDAR. Interacts with MAP3K5, MAP3K14, TRAIP/TRIP, TDP2/TTRAP, TANK/ITRAF and TRAF3IP1. Interaction with TNFRSF5/CD40 is modulated by TANK/ITRAF, which competes for the same binding site. Interacts with TICAM1. Interacts with TRAFD1. Interacts with OTUB1, OTUB2 and OTUD5. Interacts with RNF216, OPTN and TBK1. Identified in a complex with TRAF2, MAP3K14 and BIRC3. Upon exposure to bacterial lipopolysaccharide (LPS), recruited to a transient complex containing TLR4, TRAF3, TRAF6, IKBKG, MAP3K7, MYD88, TICAM1, BIRC2, BIRC3 and UBE2N. Interacts (via RING-type zinc finger domain) with SRC. Interacts with CARD14. Interacts (via MATH domain) with PTPN22; the interaction promotes TRAF3 polyubiquitination. Interacts with MAVS. Directly interacts with DDX3X; this interaction stimulates TRAF3 'Lys-63' ubiquitination. Interacts with IRF3. Interacts with IKBKE in the course of viral infection. Interacts with TRIM35. Interacts with GAPDH; promoting TRAF3 ubiquitination. Interacts with PPP3CA and PPP3CB. Interacts with RALGDS. Interacts with FBXO11. Undergoes 'Lys-48'-linked polyubiquitination, leading to its proteasomal degradation in response to signaling by TNFSF13B, TLR4 or through CD40. 'Lys-48'-linked polyubiquitinated form is deubiquitinated by OTUD7B, preventing TRAF3 proteolysis and over-activation of non-canonical NF-kappa-B. Undergoes 'Lys-63'-linked ubiquitination during early stages of virus infection, and 'Lys-48'-linked ubiquitination during later stages. Undergoes both 'Lys-48'-linked and 'Lys-63'-linked ubiquitination in response to TLR3 and TLR4 signaling. 'Lys-63'-linked ubiquitination can be mediated by TRIM35. Deubiquitinated by OTUB1, OTUB2 and OTUD5. Undergoes 'Lys-63'-linked deubiquitination by MYSM1 to terminate the pattern-recognition receptors/PRRs pathways. Ubiquitinated at Lys-328 by the SCF(FBXL2) complex, leading to its degradation by the proteasome. Post-translationally, undergoes 'Lys-48'-linked polyubiquitination, leading to its proteasomal degradation in response to signaling by TNFSF13B, TLR4 or through CD40. 'Lys-48'-linked polyubiquitinated form is deubiquitinated by OTUD7B, preventing TRAF3 proteolysis and over-activation of non-canonical NF-kappa-B. Undergoes 'Lys-63'-linked ubiquitination during early stages of virus infection, and 'Lys-48'-linked ubiquitination during later stages. Undergoes both 'Lys-48'-linked and 'Lys-63'-linked ubiquitination in response to TLR3 and TLR4 signaling. 'Lys-63'-linked ubiquitination can be mediated by TRIM35. Deubiquitinated by OTUB1, OTUB2 and OTUD5. Undergoes 'Lys-63'-linked deubiquitination by MYSM1 to terminate the pattern-recognition receptors/PRRs pathways. Also undergoes 'Lys-29'-linked ubiquitination on Cys-55 and Cys-123 by NEDD4L; leading to increased 'Lys-48'- and 'Lys-63'-linked ubiquitination as well as increased binding to TBK1. TLR4 signals emanating from bacteria containing vesicles trigger 'Lys-33'-linked polyubiquitination that promotes the assembly of the exocyst complex thereby connecting innate immune signaling to the cellular trafficking apparatus. Deubiquitinated by USP25 during viral infection, leading to TRAF3 stabilization and type I interferon production. 'Lys-63'-linked ubiquitination by FBXO11 in a NEDD8-dependent manner promotes the amplification of IFN-I signaling. As to expression, detected in bone marrow macrophages and spleen B-cells (at protein level). In adult, highest in brain. Also found in kidney, heart, thymus, spleen, lung, muscle, testis and ovary. Not found in liver.

The protein localises to the cytoplasm. It is found in the endosome. Its subcellular location is the mitochondrion. The enzyme catalyses S-ubiquitinyl-[E2 ubiquitin-conjugating enzyme]-L-cysteine + [acceptor protein]-L-lysine = [E2 ubiquitin-conjugating enzyme]-L-cysteine + N(6)-ubiquitinyl-[acceptor protein]-L-lysine.. Its function is as follows. Cytoplasmic E3 ubiquitin ligase that regulates various signaling pathways, such as the NF-kappa-B, mitogen-activated protein kinase (MAPK) and interferon regulatory factor (IRF) pathways, and thus controls a lot of biological processes in both immune and non-immune cell types. In TLR and RLR signaling pathways, acts as an E3 ubiquitin ligase promoting the synthesis of 'Lys-63'-linked polyubiquitin chains on several substrates such as ASC that lead to the activation of the type I interferon response or the inflammasome. Following the activation of certain TLRs such as TLR4, acts as a negative NF-kappa-B regulator, possibly to avoid unregulated inflammatory response, and its degradation via 'Lys-48'-linked polyubiquitination is required for MAPK activation and production of inflammatory cytokines. Alternatively, when TLR4 orchestrates bacterial expulsion, TRAF3 undergoes 'Lys-33'-linked polyubiquitination and subsequently binds to RALGDS, mobilizing the exocyst complex to rapidly expel intracellular bacteria back for clearance. Also acts as a constitutive negative regulator of the alternative NF-kappa-B pathway, which controls B-cell survival and lymphoid organ development. Required for normal antibody isotype switching from IgM to IgG. Plays a role T-cell dependent immune responses. Down-regulates proteolytic processing of NFKB2, and thereby inhibits non-canonical activation of NF-kappa-B. Promotes ubiquitination and proteasomal degradation of MAP3K14. The protein is TNF receptor-associated factor 3 of Mus musculus (Mouse).